A 100-amino-acid chain; its full sequence is Urease subunit gamma (100 aa).

Belongs to the urease gamma subunit family. Heterotrimer of UreA (gamma), UreB (beta) and UreC (alpha) subunits. Three heterotrimers associate to form the active enzyme.

It localises to the cytoplasm. The catalysed reaction is urea + 2 H2O + H(+) = hydrogencarbonate + 2 NH4(+). It functions in the pathway nitrogen metabolism; urea degradation; CO(2) and NH(3) from urea (urease route): step 1/1. This Roseobacter denitrificans (strain ATCC 33942 / OCh 114) (Erythrobacter sp. (strain OCh 114)) protein is Urease subunit gamma.